A 183-amino-acid polypeptide reads, in one-letter code: Acireductone dioxygenase (183 aa).

Residues His99, His101, Glu105, and His144 each coordinate Fe(2+). Ni(2+)-binding residues include His99, His101, Glu105, and His144.

It belongs to the acireductone dioxygenase (ARD) family. In terms of assembly, monomer. Fe(2+) serves as cofactor. Ni(2+) is required as a cofactor.

The enzyme catalyses 1,2-dihydroxy-5-(methylsulfanyl)pent-1-en-3-one + O2 = 3-(methylsulfanyl)propanoate + CO + formate + 2 H(+). The catalysed reaction is 1,2-dihydroxy-5-(methylsulfanyl)pent-1-en-3-one + O2 = 4-methylsulfanyl-2-oxobutanoate + formate + 2 H(+). It functions in the pathway amino-acid biosynthesis; L-methionine biosynthesis via salvage pathway; L-methionine from S-methyl-5-thio-alpha-D-ribose 1-phosphate: step 5/6. Functionally, catalyzes 2 different reactions between oxygen and the acireductone 1,2-dihydroxy-3-keto-5-methylthiopentene (DHK-MTPene) depending upon the metal bound in the active site. Fe-containing acireductone dioxygenase (Fe-ARD) produces formate and 2-keto-4-methylthiobutyrate (KMTB), the alpha-ketoacid precursor of methionine in the methionine recycle pathway. Ni-containing acireductone dioxygenase (Ni-ARD) produces methylthiopropionate, carbon monoxide and formate, and does not lie on the methionine recycle pathway. The sequence is that of Acireductone dioxygenase from Microcystis aeruginosa (strain NIES-843 / IAM M-2473).